A 172-amino-acid chain; its full sequence is Signal peptidase complex catalytic subunit SEC11 (172 aa).

At 1-14 (MLSSLANPRQAASQ) the chain is on the cytoplasmic side. Residues 15–35 (LLNFALILSTAFMMWKGLSVV) traverse the membrane as a helical; Signal-anchor for type II membrane protein segment. The Lumenal segment spans residues 36–172 (SDSPSPIVVV…MGLVVVLQRE (137 aa)). Residues Ser49, His90, and Asp115 each act as charge relay system in the active site. Residues 158–169 (AMLGIMGLVVVL) are C-terminal short (CTS) helix.

The protein belongs to the peptidase S26B family. In terms of assembly, component of the signal peptidase complex (SPC) composed of a catalytic subunit SEC11 and three accessory subunits SPC1, SPC2 and SPC3. The complex induces a local thinning of the ER membrane which is used to measure the length of the signal peptide (SP) h-region of protein substrates. This ensures the selectivity of the complex towards h-regions shorter than 18-20 amino acids. SPC associates with the translocon complex.

The protein localises to the endoplasmic reticulum membrane. The enzyme catalyses Cleavage of hydrophobic, N-terminal signal or leader sequences from secreted and periplasmic proteins.. Its function is as follows. Catalytic component of the signal peptidase complex (SPC) which catalyzes the cleavage of N-terminal signal sequences from nascent proteins as they are translocated into the lumen of the endoplasmic reticulum. Specifically cleaves N-terminal signal peptides that contain a hydrophobic alpha-helix (h-region) shorter than 18-20 amino acids. This is Signal peptidase complex catalytic subunit SEC11 (SEC11) from Colletotrichum graminicola (strain M1.001 / M2 / FGSC 10212) (Maize anthracnose fungus).